The primary structure comprises 429 residues: Bifunctional protein GlmU (429 aa).

Positions 1–223 (MKISVLILAA…EQDFMGVNDK (223 aa)) are pyrophosphorylase. Residues 8–11 (LAAG), K22, Q74, and 81–82 (GT) each bind UDP-N-acetyl-alpha-D-glucosamine. D102 contributes to the Mg(2+) binding site. 4 residues coordinate UDP-N-acetyl-alpha-D-glucosamine: G135, E149, N164, and N221. N221 lines the Mg(2+) pocket. A linker region spans residues 224 to 244 (IELCLAQDLMQEAIKKEWMKQ). An N-acetyltransferase region spans residues 245-429 (GVIFHMPATT…KDYFYTKFKK (185 aa)). Residues R308 and K325 each coordinate UDP-N-acetyl-alpha-D-glucosamine. The active-site Proton acceptor is the H336. 2 residues coordinate UDP-N-acetyl-alpha-D-glucosamine: Y339 and N350. Residues 359 to 360 (NY), S378, A396, and R413 contribute to the acetyl-CoA site.

In the N-terminal section; belongs to the N-acetylglucosamine-1-phosphate uridyltransferase family. It in the C-terminal section; belongs to the transferase hexapeptide repeat family. In terms of assembly, homotrimer. Mg(2+) serves as cofactor.

Its subcellular location is the cytoplasm. It carries out the reaction alpha-D-glucosamine 1-phosphate + acetyl-CoA = N-acetyl-alpha-D-glucosamine 1-phosphate + CoA + H(+). It catalyses the reaction N-acetyl-alpha-D-glucosamine 1-phosphate + UTP + H(+) = UDP-N-acetyl-alpha-D-glucosamine + diphosphate. The protein operates within nucleotide-sugar biosynthesis; UDP-N-acetyl-alpha-D-glucosamine biosynthesis; N-acetyl-alpha-D-glucosamine 1-phosphate from alpha-D-glucosamine 6-phosphate (route II): step 2/2. Its pathway is nucleotide-sugar biosynthesis; UDP-N-acetyl-alpha-D-glucosamine biosynthesis; UDP-N-acetyl-alpha-D-glucosamine from N-acetyl-alpha-D-glucosamine 1-phosphate: step 1/1. It functions in the pathway bacterial outer membrane biogenesis; LPS lipid A biosynthesis. Its function is as follows. Catalyzes the last two sequential reactions in the de novo biosynthetic pathway for UDP-N-acetylglucosamine (UDP-GlcNAc). The C-terminal domain catalyzes the transfer of acetyl group from acetyl coenzyme A to glucosamine-1-phosphate (GlcN-1-P) to produce N-acetylglucosamine-1-phosphate (GlcNAc-1-P), which is converted into UDP-GlcNAc by the transfer of uridine 5-monophosphate (from uridine 5-triphosphate), a reaction catalyzed by the N-terminal domain. In Campylobacter lari (strain RM2100 / D67 / ATCC BAA-1060), this protein is Bifunctional protein GlmU.